The sequence spans 122 residues: Large ribosomal subunit protein uL14 (122 aa).

The protein belongs to the universal ribosomal protein uL14 family. Part of the 50S ribosomal subunit. Forms a cluster with proteins L3 and L19. In the 70S ribosome, L14 and L19 interact and together make contacts with the 16S rRNA in bridges B5 and B8.

Binds to 23S rRNA. Forms part of two intersubunit bridges in the 70S ribosome. The protein is Large ribosomal subunit protein uL14 of Methylorubrum populi (strain ATCC BAA-705 / NCIMB 13946 / BJ001) (Methylobacterium populi).